Reading from the N-terminus, the 174-residue chain is Pituitary tumor-transforming gene 1 protein-interacting protein (174 aa).

The signal sequence occupies residues 1–29 (MASAVLGLTLRWVMFLSAVLLLLLPGASA). At 30–93 (QEPPGVGCSE…RWGVCWVNFE (64 aa)) the chain is on the extracellular side. The PSI domain maps to 36–89 (GCSEYTNRSCEECLRNVSCLWCNENKACLDYPVRKILPPASLCKLSSARWGVCW). Asparagine 42 and asparagine 51 each carry an N-linked (GlcNAc...) asparagine glycan. A helical membrane pass occupies residues 94–114 (ALIITMSVLGGSVLLGITVCC). Topologically, residues 115 to 174 (CCCCRRKRSRKPDKSDERAMREQEERRVRQEERRAEMKSRHDEIRKKYGLFKEQNPYEKF) are cytoplasmic. The interval 126-155 (PDKSDERAMREQEERRVRQEERRAEMKSRH) is disordered. Residues 127 to 163 (DKSDERAMREQEERRVRQEERRAEMKSRHDEIRKKYG) adopt a coiled-coil conformation. Position 171 is a phosphotyrosine (tyrosine 171).

In terms of assembly, interacts with PTTG1.

It localises to the cell membrane. Its subcellular location is the cytoplasm. The protein resides in the nucleus. Its function is as follows. May facilitate PTTG1 nuclear translocation. The protein is Pituitary tumor-transforming gene 1 protein-interacting protein (Pttg1ip) of Rattus norvegicus (Rat).